The following is a 1188-amino-acid chain: MDLPRGLVVAWALSLWPGFTDTFNMDTRKPRVIPGSRTAFFGYTVQQHDISGNKWLVVGAPLETNGYQKTGDVYKCPVIHGNCTKLNLGRVTLSNVSERKDNMRLGLSLATNPKDNSFLACSPLWSHECGSSYYTTGMCSRVNSNFRFSKTVAPALQRCQTYMDIVIVLDGSNSIYPWVEVQHFLINILKKFYIGPGQIQVGVVQYGEDVVHEFHLNDYRSVKDVVEAASHIEQRGGTETRTAFGIEFARSEAFQKGGRKGAKKVMIVITDGESHDSPDLEKVIQQSERDNVTRYAVAVLGYYNRRGINPETFLNEIKYIASDPDDKHFFNVTDEAALKDIVDALGDRIFSLEGTNKNETSFGLEMSQTGFSSHVVEDGVLLGAVGAYDWNGAVLKETSAGKVIPLRESYLKEFPEELKNHGAYLGYTVTSVVSSRQGRVYVAGAPRFNHTGKVILFTMHNNRSLTIHQAMRGQQIGSYFGSEITSVDIDGDGVTDVLLVGAPMYFNEGRERGKVYVYELRQNLFVYNGTLKDSHSYQNARFGSSIASVRDLNQDSYNDVVVGAPLEDNHAGAIYIFHGFRGSILKTPKQRITASELATGLQYFGCSIHGQLDLNEDGLIDLAVGALGNAVILWSRPVVQINASLHFEPSKINIFHRDCKRSGRDATCLAAFLCFTPIFLAPHFQTTTVGIRYNATMDERRYTPRAHLDEGGDRFTNRAVLLSSGQELCERINFHVLDTADYVKPVTFSVEYSLEDPDHGPMLDDGWPTTLRVSVPFWNGCNEDEHCVPDLVLDARSDLPTAMEYCQRVLRKPAQDCSAYTLSFDTTVFIIESTRQRVAVEATLENRGENAYSTVLNISQSANLQFASLIQKEDSDGSIECVNEERRLQKQVCNVSYPFFRAKAKVAFRLDFEFSKSIFLHHLEIELAAGSDSNERDSTKEDNVAPLRFHLKYEADVLFTRSSSLSHYEVKPNSSLERYDGIGPPFSCIFRIQNLGLFPIHGMMMKITIPIATRSGNRLLKLRDFLTDEANTSCNIWGNSTEYRPTPVEEDLRRAPQLNHSNSDVVSINCNIRLVPNQEINFHLLGNLWLRSLKALKYKSMKIMVNAALQRQFHSPFIFREEDPSRQIVFEISKQEDWQVPIWIIVGSTLGGLLLLALLVLALWKLGFFRSARRRREPGLDPTPKVLE.

An N-terminal signal peptide occupies residues 1–22; that stretch reads MDLPRGLVVAWALSLWPGFTDT. Residues 23–1141 lie on the Extracellular side of the membrane; sequence FNMDTRKPRV…ISKQEDWQVP (1119 aa). 2 FG-GAP repeats span residues 24 to 85 and 91 to 151; these read NMDT…NCTK and VTLS…FSKT. Cysteine 76 and cysteine 83 are joined by a disulfide. 2 N-linked (GlcNAc...) asparagine glycosylation sites follow: asparagine 82 and asparagine 95. Intrachain disulfides connect cysteine 121–cysteine 139 and cysteine 129–cysteine 159. Positions 164–345 constitute a VWFA domain; the sequence is DIVIVLDGSN…AALKDIVDAL (182 aa). Residues asparagine 291, asparagine 331, asparagine 358, asparagine 449, and asparagine 462 are each glycosylated (N-linked (GlcNAc...) asparagine). 5 FG-GAP repeats span residues 355–406, 411–461, 462–527, 528–586, and 590–650; these read TNKN…VIPL, LKEF…TMHN, NRSL…LFVY, NGTL…SILK, and QRIT…FEPS. Residues aspartate 488, aspartate 490, aspartate 492, and aspartate 496 each coordinate Ca(2+). Residue asparagine 528 is glycosylated (N-linked (GlcNAc...) asparagine). 8 residues coordinate Ca(2+): aspartate 551, asparagine 553, aspartate 555, aspartate 559, aspartate 613, asparagine 615, aspartate 617, and aspartate 621. A glycan (N-linked (GlcNAc...) asparagine) is linked at asparagine 642. Disulfide bonds link cysteine 659/cysteine 668, cysteine 674/cysteine 729, and cysteine 781/cysteine 787. A glycan (N-linked (GlcNAc...) asparagine) is linked at asparagine 694. N-linked (GlcNAc...) asparagine glycosylation is present at asparagine 857. Cysteine 881 and cysteine 893 are disulfide-bonded. N-linked (GlcNAc...) asparagine glycans are attached at residues asparagine 894, asparagine 973, asparagine 1031, asparagine 1039, and asparagine 1059. Residues 1142–1164 form a helical membrane-spanning segment; sequence IWIIVGSTLGGLLLLALLVLALW. Over 1165–1188 the chain is Cytoplasmic; it reads KLGFFRSARRRREPGLDPTPKVLE.

This sequence belongs to the integrin alpha chain family. Heterodimer of an alpha and a beta subunit. Alpha-11 associates with beta-1. Interacts with RAB21. In terms of tissue distribution, according to PubMed:10464311, highest levels of expression in uterus and heart, intermediate levels in skeletal muscle and intermediate to low levels in pancreas, kidney and placenta. According to PubMed:10486209, also found in brain, colon, lung, small intestine, stomach, testis, salivary glands, thyroid glands and prostate. Very low levels in peripheral blood lymphocytes, fetal brain and fetal liver.

The protein localises to the membrane. Integrin alpha-11/beta-1 is a receptor for collagen. This Homo sapiens (Human) protein is Integrin alpha-11 (ITGA11).